The following is a 300-amino-acid chain: tRNA dimethylallyltransferase (300 aa).

11 to 18 contributes to the ATP binding site; that stretch reads GPTAVGKS. 13 to 18 provides a ligand contact to substrate; that stretch reads TAVGKS. The tract at residues 35-38 is interaction with substrate tRNA; that stretch reads DSIQ.

It belongs to the IPP transferase family. As to quaternary structure, monomer. Requires Mg(2+) as cofactor.

The catalysed reaction is adenosine(37) in tRNA + dimethylallyl diphosphate = N(6)-dimethylallyladenosine(37) in tRNA + diphosphate. In terms of biological role, catalyzes the transfer of a dimethylallyl group onto the adenine at position 37 in tRNAs that read codons beginning with uridine, leading to the formation of N6-(dimethylallyl)adenosine (i(6)A). In Borrelia duttonii (strain Ly), this protein is tRNA dimethylallyltransferase.